We begin with the raw amino-acid sequence, 256 residues long: CRAL-TRIO domain-containing protein DDB_G0278031 (256 aa).

The CRAL-TRIO domain occupies 82–245 (NPELAMKSSS…EYGGTLNLTY (164 aa)).

The protein is CRAL-TRIO domain-containing protein DDB_G0278031 of Dictyostelium discoideum (Social amoeba).